The chain runs to 130 residues: uncharacterized protein (130 aa).

Over 1–58 (MREQLKLFTREIVDFTFLILSGFDYYQTLLISSNSSKKRPKDSSLLSEKKKKKKKKKK) the chain is Cytoplasmic. The tract at residues 34–57 (NSSKKRPKDSSLLSEKKKKKKKKK) is disordered. A helical membrane pass occupies residues 59–79 (DVLSYLSYLKDLPFVPFLFWQ). Over 80-94 (PGYSQREKNPRQHSL) the chain is Extracellular. The chain crosses the membrane as a helical span at residues 95-115 (FIMTITKPGMISMADMNYVVS). Over 116 to 130 (KNRSLNRPAERGGNR) the chain is Cytoplasmic.

The protein resides in the membrane. This is an uncharacterized protein from Saccharomyces cerevisiae (strain ATCC 204508 / S288c) (Baker's yeast).